The primary structure comprises 205 residues: High frequency lysogenization protein HflD homolog (205 aa).

The protein belongs to the HflD family.

The protein resides in the cytoplasm. It is found in the cell inner membrane. This Hahella chejuensis (strain KCTC 2396) protein is High frequency lysogenization protein HflD homolog.